Reading from the N-terminus, the 1187-residue chain is Non-receptor tyrosine-protein kinase TYK2 (1187 aa).

One can recognise an FERM domain in the interval 26 to 431 (GGLKVLLHWA…GYFRLTADSS (406 aa)). Tyrosine 292 carries the phosphotyrosine modification. The disordered stretch occupies residues 335-366 (KEEGSSGSSGRNPQASLFGKKAKAHKAVGQPA). Residues 339–349 (SSGSSGRNPQA) are compositionally biased toward polar residues. Positions 450–529 (GIHGPLLEPF…GRSFPSVREL (80 aa)) constitute an SH2; atypical domain. Phosphoserine occurs at positions 499 and 525. Residues 589–875 (ITQLSHLGQG…LTRLQPHNLA (287 aa)) enclose the Protein kinase 1 domain. Residue tyrosine 604 is modified to Phosphotyrosine. The tract at residues 610 to 629 (VEGSGDPEEGKMDDEDPLVP) is disordered. Residues 614–626 (GDPEEGKMDDEDP) show a composition bias toward acidic residues. Phosphoserine is present on serine 884. Positions 897-1176 (LKKIRDLGEG…PILKTVHEKY (280 aa)) constitute a Protein kinase 2 domain. Residues 903-911 (LGEGHFGKV) and lysine 930 contribute to the ATP site. Aspartate 1023 (proton acceptor) is an active-site residue. Tyrosine 1054 is modified (phosphotyrosine; by autocatalysis). Tyrosine 1055 is subject to Phosphotyrosine.

This sequence belongs to the protein kinase superfamily. Tyr protein kinase family. JAK subfamily. As to quaternary structure, interacts (via FERM domain) with JAKMIP1. Interacts with PIK3R1; this interaction is important for cell migration. Interacts with MPL/TPOR. (Microbial infection) Interacts with Epstein-Barr virus protein LMP1; this interaction inhibits TYK2-mediated interferon signaling. In terms of assembly, (Microbial infection) Interacts with papillomavirus-18 protein E6; this interaction impairs JAK-STAT activation by interferon-alpha. As to quaternary structure, (Microbial infection) Interacts with Epstein-Barr virus (EBV) tegument protein BGLF2; this interaction participates in the inhibition of type I IFN signaling by the virus. In terms of processing, phosphorylated. Phosphorylation by JAK1 at Tyr-1054 and Tyr-1055 induces kinase activation. As to expression, observed in all cell lines analyzed. Expressed in a variety of lymphoid and non-lymphoid cell lines.

The catalysed reaction is L-tyrosyl-[protein] + ATP = O-phospho-L-tyrosyl-[protein] + ADP + H(+). The protein kinase 1 domain (also termed pseudokinase domain) mediates autoinhibition of the TYK2 kinase domain. In terms of biological role, tyrosine kinase of the non-receptor type involved in numerous cytokines and interferons signaling, which regulates cell growth, development, cell migration, innate and adaptive immunity. Plays both structural and catalytic roles in numerous interleukins and interferons (IFN-alpha/beta) signaling. Associates with heterodimeric cytokine receptor complexes and activates STAT family members including STAT1, STAT3, STAT4 or STAT6. The heterodimeric cytokine receptor complexes are composed of (1) a TYK2-associated receptor chain (IFNAR1, IL12RB1, IL10RB or IL13RA1), and (2) a second receptor chain associated either with JAK1 or JAK2. In response to cytokine-binding to receptors, phosphorylates and activates receptors (IFNAR1, IL12RB1, IL10RB or IL13RA1), creating docking sites for STAT members. In turn, recruited STATs are phosphorylated by TYK2 (or JAK1/JAK2 on the second receptor chain), form homo- and heterodimers, translocate to the nucleus, and regulate cytokine/growth factor responsive genes. Negatively regulates STAT3 activity by promototing phosphorylation at a specific tyrosine that differs from the site used for signaling. The polypeptide is Non-receptor tyrosine-protein kinase TYK2 (TYK2) (Homo sapiens (Human)).